The following is a 354-amino-acid chain: tRNA dimethylallyltransferase (354 aa).

28 to 35 (GPTATGKS) is an ATP binding site. 30–35 (TATGKS) is a binding site for substrate. Residues 53–56 (DSRQ) are interaction with substrate tRNA.

The protein belongs to the IPP transferase family. In terms of assembly, monomer. Requires Mg(2+) as cofactor.

It carries out the reaction adenosine(37) in tRNA + dimethylallyl diphosphate = N(6)-dimethylallyladenosine(37) in tRNA + diphosphate. Its function is as follows. Catalyzes the transfer of a dimethylallyl group onto the adenine at position 37 in tRNAs that read codons beginning with uridine, leading to the formation of N6-(dimethylallyl)adenosine (i(6)A). The polypeptide is tRNA dimethylallyltransferase (Synechococcus sp. (strain JA-2-3B'a(2-13)) (Cyanobacteria bacterium Yellowstone B-Prime)).